The primary structure comprises 499 residues: Protein-tyrosine sulfotransferase (499 aa).

At 1 to 9 (MRLPYRNKK) the chain is on the cytoplasmic side. Residues 10-30 (VTLWVLFGIIVITMFLFKFTE) traverse the membrane as a helical; Signal-anchor for type II membrane protein segment. Residues 31 to 499 (LRPTCLFKVD…NIMEDPMADT (469 aa)) lie on the Lumenal side of the membrane. 80 to 84 (RSGTT) is a binding site for 3'-phosphoadenylyl sulfate. A disulfide bond links Cys98 and Cys158. Glu101 (proton donor/acceptor) is an active-site residue. The segment at 103 to 107 (RVIPR) is interaction with peptide substrate. Residues Arg185, Ser193, and Arg197 each contribute to the 3'-phosphoadenylyl sulfate site. Cys227 and Cys235 form a disulfide bridge. Residues Tyr240, 287-296 (SSDQVIKPVN), and Lys302 each bind 3'-phosphoadenylyl sulfate. N-linked (GlcNAc...) asparagine glycosylation is found at Asn346 and Asn380. Disordered regions lie at residues 362–460 (KQVL…QKPK) and 476–499 (NNIN…MADT). 2 stretches are compositionally biased toward low complexity: residues 375–400 (TNTI…IIPE) and 408–434 (HVQQ…QQQQ). Residues 443–460 (EREAEPDREQQLLHQKPK) are compositionally biased toward basic and acidic residues. A compositionally biased stretch (low complexity) spans 476-491 (NNINNNINNNNNNNNI).

Belongs to the protein sulfotransferase family.

The protein resides in the golgi apparatus membrane. The enzyme catalyses L-tyrosyl-[protein] + 3'-phosphoadenylyl sulfate = O-sulfo-L-tyrosine-[protein] + adenosine 3',5'-bisphosphate + H(+). Functionally, catalyzes the O-sulfation of tyrosine residues within acidic motifs of polypeptides. Has a role in protein secretion. This chain is Protein-tyrosine sulfotransferase, found in Drosophila melanogaster (Fruit fly).